We begin with the raw amino-acid sequence, 439 residues long: Tol-Pal system protein TolB (439 aa).

An N-terminal signal peptide occupies residues 1 to 24 (MRNGMRKIIAGVFIFVFLISNLYA).

It belongs to the TolB family. As to quaternary structure, the Tol-Pal system is composed of five core proteins: the inner membrane proteins TolA, TolQ and TolR, the periplasmic protein TolB and the outer membrane protein Pal. They form a network linking the inner and outer membranes and the peptidoglycan layer.

The protein localises to the periplasm. Its function is as follows. Part of the Tol-Pal system, which plays a role in outer membrane invagination during cell division and is important for maintaining outer membrane integrity. The protein is Tol-Pal system protein TolB of Francisella tularensis subsp. tularensis (strain FSC 198).